A 117-amino-acid polypeptide reads, in one-letter code: Large ribosomal subunit protein eL34 (117 aa).

Ser-12 carries the phosphoserine modification. Lys-36 and Lys-43 each carry N6-acetyllysine. Residue Lys-108 forms a Glycyl lysine isopeptide (Lys-Gly) (interchain with G-Cter in SUMO2) linkage.

It belongs to the eukaryotic ribosomal protein eL34 family. As to quaternary structure, component of the large ribosomal subunit.

Its subcellular location is the cytoplasm. The protein resides in the cytosol. It localises to the endoplasmic reticulum. Functionally, component of the large ribosomal subunit. The ribosome is a large ribonucleoprotein complex responsible for the synthesis of proteins in the cell. In Rattus norvegicus (Rat), this protein is Large ribosomal subunit protein eL34 (Rpl34).